A 395-amino-acid chain; its full sequence is Elongation factor Tu (395 aa).

The region spanning 10 to 205 is the tr-type G domain; that stretch reads KVHMNVGTIG…AMDSYFEDPV (196 aa). The G1 stretch occupies residues 19-26; sequence GHVDHGKT. 19 to 26 serves as a coordination point for GTP; the sequence is GHVDHGKT. Residue Thr-26 participates in Mg(2+) binding. The G2 stretch occupies residues 60-64; the sequence is GITIN. A G3 region spans residues 81-84; the sequence is DCPG. Residues 81 to 85 and 136 to 139 contribute to the GTP site; these read DCPGH and NKVD. Residues 136 to 139 form a G4 region; the sequence is NKVD. A G5 region spans residues 173–175; sequence SAF.

This sequence belongs to the TRAFAC class translation factor GTPase superfamily. Classic translation factor GTPase family. EF-Tu/EF-1A subfamily. Monomer.

Its subcellular location is the cytoplasm. It catalyses the reaction GTP + H2O = GDP + phosphate + H(+). Functionally, GTP hydrolase that promotes the GTP-dependent binding of aminoacyl-tRNA to the A-site of ribosomes during protein biosynthesis. This chain is Elongation factor Tu, found in Treponema pallidum (strain Nichols).